The following is a 473-amino-acid chain: Photosystem II CP43 reaction center protein (473 aa).

Positions 1 to 14 (MKTLYSLRRFYHVE) are excised as a propeptide. An N-acetylthreonine modification is found at T15. T15 is modified (phosphothreonine). The next 5 helical transmembrane spans lie at 69 to 93 (LFEV…PHLA), 134 to 155 (LLGP…KDRN), 178 to 200 (KALY…RKIT), 255 to 275 (KPFA…LSYS), and 291 to 312 (WFNN…ASQA). E367 is a [CaMn4O5] cluster binding site. The chain crosses the membrane as a helical span at residues 447–471 (RARAAAAGFEKGIDRDFEPVLSMTP).

This sequence belongs to the PsbB/PsbC family. PsbC subfamily. As to quaternary structure, PSII is composed of 1 copy each of membrane proteins PsbA, PsbB, PsbC, PsbD, PsbE, PsbF, PsbH, PsbI, PsbJ, PsbK, PsbL, PsbM, PsbT, PsbX, PsbY, PsbZ, Psb30/Ycf12, at least 3 peripheral proteins of the oxygen-evolving complex and a large number of cofactors. It forms dimeric complexes. It depends on Binds multiple chlorophylls and provides some of the ligands for the Ca-4Mn-5O cluster of the oxygen-evolving complex. It may also provide a ligand for a Cl- that is required for oxygen evolution. PSII binds additional chlorophylls, carotenoids and specific lipids. as a cofactor.

It localises to the plastid. Its subcellular location is the chloroplast thylakoid membrane. Functionally, one of the components of the core complex of photosystem II (PSII). It binds chlorophyll and helps catalyze the primary light-induced photochemical processes of PSII. PSII is a light-driven water:plastoquinone oxidoreductase, using light energy to abstract electrons from H(2)O, generating O(2) and a proton gradient subsequently used for ATP formation. In Crucihimalaya wallichii (Rock-cress), this protein is Photosystem II CP43 reaction center protein.